The sequence spans 454 residues: Bifunctional protein GlmU (454 aa).

The tract at residues Met-1 to Arg-226 is pyrophosphorylase. UDP-N-acetyl-alpha-D-glucosamine contacts are provided by residues Leu-8–Gly-11, Lys-22, Gln-73, Gly-78–Thr-79, Tyr-99–Asp-101, Gly-136, Glu-151, Asn-166, and Asn-224. Position 101 (Asp-101) interacts with Mg(2+). Asn-224 contacts Mg(2+). The segment at Met-227–Gln-247 is linker. The tract at residues Gly-248–Lys-454 is N-acetyltransferase. Residues Arg-330 and Lys-348 each coordinate UDP-N-acetyl-alpha-D-glucosamine. The active-site Proton acceptor is His-360. Tyr-363 and Asn-374 together coordinate UDP-N-acetyl-alpha-D-glucosamine. Acetyl-CoA contacts are provided by residues Ala-377, Asn-383–Tyr-384, Ser-402, Ala-420, and Arg-437.

It in the N-terminal section; belongs to the N-acetylglucosamine-1-phosphate uridyltransferase family. In the C-terminal section; belongs to the transferase hexapeptide repeat family. Homotrimer. Mg(2+) is required as a cofactor.

It is found in the cytoplasm. It catalyses the reaction alpha-D-glucosamine 1-phosphate + acetyl-CoA = N-acetyl-alpha-D-glucosamine 1-phosphate + CoA + H(+). The enzyme catalyses N-acetyl-alpha-D-glucosamine 1-phosphate + UTP + H(+) = UDP-N-acetyl-alpha-D-glucosamine + diphosphate. It functions in the pathway nucleotide-sugar biosynthesis; UDP-N-acetyl-alpha-D-glucosamine biosynthesis; N-acetyl-alpha-D-glucosamine 1-phosphate from alpha-D-glucosamine 6-phosphate (route II): step 2/2. Its pathway is nucleotide-sugar biosynthesis; UDP-N-acetyl-alpha-D-glucosamine biosynthesis; UDP-N-acetyl-alpha-D-glucosamine from N-acetyl-alpha-D-glucosamine 1-phosphate: step 1/1. It participates in bacterial outer membrane biogenesis; LPS lipid A biosynthesis. Catalyzes the last two sequential reactions in the de novo biosynthetic pathway for UDP-N-acetylglucosamine (UDP-GlcNAc). The C-terminal domain catalyzes the transfer of acetyl group from acetyl coenzyme A to glucosamine-1-phosphate (GlcN-1-P) to produce N-acetylglucosamine-1-phosphate (GlcNAc-1-P), which is converted into UDP-GlcNAc by the transfer of uridine 5-monophosphate (from uridine 5-triphosphate), a reaction catalyzed by the N-terminal domain. In Pseudomonas aeruginosa (strain LESB58), this protein is Bifunctional protein GlmU.